The following is a 312-amino-acid chain: HPr kinase/phosphorylase (312 aa).

Catalysis depends on residues histidine 139 and lysine 160. 154–161 (GDSGIGKS) is a binding site for ATP. Position 161 (serine 161) interacts with Mg(2+). Aspartate 178 acts as the Proton acceptor; for phosphorylation activity. Proton donor; for dephosphorylation activity in catalysis. The interval 202–211 (IEIRGVGIID) is important for the catalytic mechanism of both phosphorylation and dephosphorylation. Glutamate 203 contributes to the Mg(2+) binding site. The active site involves arginine 244. The segment at 265 to 270 (PVKTGR) is important for the catalytic mechanism of dephosphorylation.

This sequence belongs to the HPrK/P family. In terms of assembly, homohexamer. Mg(2+) serves as cofactor.

The enzyme catalyses [HPr protein]-L-serine + ATP = [HPr protein]-O-phospho-L-serine + ADP + H(+). The catalysed reaction is [HPr protein]-O-phospho-L-serine + phosphate + H(+) = [HPr protein]-L-serine + diphosphate. Its function is as follows. Catalyzes the ATP- as well as the pyrophosphate-dependent phosphorylation of a specific serine residue in HPr, a phosphocarrier protein of the phosphoenolpyruvate-dependent sugar phosphotransferase system (PTS). HprK/P also catalyzes the pyrophosphate-producing, inorganic phosphate-dependent dephosphorylation (phosphorolysis) of seryl-phosphorylated HPr (P-Ser-HPr). The two antagonistic activities of HprK/P are regulated by several intracellular metabolites, which change their concentration in response to the absence or presence of rapidly metabolisable carbon sources (glucose, fructose, etc.) in the growth medium. Therefore, by controlling the phosphorylation state of HPr, HPrK/P is a sensor enzyme that plays a major role in the regulation of carbon metabolism and sugar transport: it mediates carbon catabolite repression (CCR), and regulates PTS-catalyzed carbohydrate uptake and inducer exclusion. This Streptococcus pneumoniae (strain ATCC BAA-255 / R6) protein is HPr kinase/phosphorylase.